We begin with the raw amino-acid sequence, 131 residues long: Bypass of stop codon protein 4 (131 aa).

The chain is Bypass of stop codon protein 4 (BSC4) from Saccharomyces cerevisiae (strain ATCC 204508 / S288c) (Baker's yeast).